The primary structure comprises 375 residues: Killer cell immunoglobulin-like receptor 2DL5A (375 aa).

The N-terminal stretch at 1-21 (MSLMVISMACVGFFLLQGAWT) is a signal peptide. Residues 22–238 (HEGGQDKPLL…PSSKTGIRRH (217 aa)) lie on the Extracellular side of the membrane. 2 Ig-like C2-type domains span residues 42-102 (GGHV…HPRS) and 137-200 (GENV…LHDS). An intrachain disulfide couples C49 to C95. 3 N-linked (GlcNAc...) asparagine glycosylation sites follow: N139, N173, and N218. C144 and C193 form a disulfide bridge. The interval 213–233 (VSVTGNSSSSSSSPTEPSSKT) is disordered. Residues 219–231 (SSSSSSSPTEPSS) show a composition bias toward low complexity. A helical transmembrane segment spans residues 239-259 (LHILIGTSVAIILFIILFFFL). Over 260–375 (LHCCCSNKKN…ASSHVPAAGI (116 aa)) the chain is Cytoplasmic. Residues 334–375 (AKPRSLSPAHKHHSQALRGSSRETTALSQNRVASSHVPAAGI) form a disordered region. The segment covering 355–366 (RETTALSQNRVA) has biased composition (polar residues).

Belongs to the immunoglobulin superfamily.

Its subcellular location is the cell membrane. Functionally, receptor on natural killer (NK) cells for HLA-C alleles. Inhibits the activity of NK cells thus preventing cell lysis. In Homo sapiens (Human), this protein is Killer cell immunoglobulin-like receptor 2DL5A (KIR2DL5A).